A 727-amino-acid chain; its full sequence is Long-chain-fatty-acid--[acyl-carrier-protein] ligase AEE15, chloroplastic (727 aa).

The N-terminal 66 residues, 1–66, are a transit peptide targeting the chloroplast; sequence MQIRLKPDYS…PSFRRFRVHC (66 aa).

The protein belongs to the ATP-dependent AMP-binding enzyme family.

The protein localises to the plastid. It is found in the chloroplast. It catalyses the reaction a long-chain fatty acid + holo-[ACP] + ATP = a long-chain fatty acyl-[ACP] + AMP + diphosphate. Its function is as follows. Probably involved in the activation of fatty acids to acyl-carrier-protein prior to fatty acid elongation in plastids. Acts on medium- to long-chain fatty acids. The chain is Long-chain-fatty-acid--[acyl-carrier-protein] ligase AEE15, chloroplastic (AAE15) from Arabidopsis thaliana (Mouse-ear cress).